The following is a 201-amino-acid chain: Syndecan-2 (201 aa).

The signal sequence occupies residues 1-18; it reads MQRAWILLTLGLMACVSA. The Extracellular portion of the chain corresponds to 19 to 144; sequence ETRAELTSDK…HSDNLFKRTE (126 aa). Serine 41, serine 55, and serine 57 each carry an O-linked (Xyl...) (glycosaminoglycan) serine glycan. Disordered stretches follow at residues 42–69 and 88–129; these read GLYPIDDDDYSSASGSGAYEDKGSPDLT and TMTL…KSTD. Over residues 90–102 the composition is skewed to polar residues; that stretch reads TLKTQSITPTQTE. A compositionally biased stretch (basic and acidic residues) spans 106 to 123; it reads ETDKKEFEISEAEEKQDP. Serine 115 carries the post-translational modification Phosphoserine. The chain crosses the membrane as a helical span at residues 145–169; that stretch reads VLAAVIAGGVIGFLFAIFLILLLVY. Over 170-201 the chain is Cytoplasmic; sequence RMRKKDEGSYDLGERKPSSAAYQKAPTKEFYA. A disordered region spans residues 178 to 201; the sequence is SYDLGERKPSSAAYQKAPTKEFYA. Position 187 is a phosphoserine (serine 187).

The protein belongs to the syndecan proteoglycan family. In terms of assembly, interacts (via cytoplasmic domain) with SARM1. Forms a complex with SDCBP and PDCD6IP. O-glycosylated; contains both heparan sulfate and chondroitin sulfate.

The protein localises to the membrane. Functionally, cell surface proteoglycan which regulates dendritic arbor morphogenesis. The polypeptide is Syndecan-2 (Sdc2) (Rattus norvegicus (Rat)).